Consider the following 1121-residue polypeptide: Anillin (1121 aa).

An N-acetylmethionine modification is found at Met-1. Residues Met-1 to Glu-25 are compositionally biased toward basic and acidic residues. The required for ubiquitination stretch occupies residues Met-1–Ser-45. Disordered stretches follow at residues Met-1–Ser-113, Ala-125–Arg-196, and Asp-212–Ile-402. The interaction with CD2AP stretch occupies residues Met-1–His-154. A nuclear localization region spans residues Met-1–Pro-228. 2 positions are modified to phosphoserine: Ser-73 and Ser-96. The segment covering Ser-96–Pro-109 has biased composition (pro residues). Polar residues predominate over residues Asn-130–Thr-143. The span at Arg-147–Ser-157 shows a compositional bias: basic and acidic residues. Residue Ser-180 is modified to Phosphoserine. Thr-192 is subject to Phosphothreonine. A compositionally biased stretch (polar residues) spans His-216–Pro-228. Phosphoserine occurs at positions 223, 250, and 259. The segment at Gly-229–Tyr-671 is interaction with F-actin. Positions Ser-234–Ser-250 are enriched in low complexity. A compositionally biased stretch (low complexity) spans Ser-282 to Ala-298. Basic and acidic residues predominate over residues Glu-303–His-314. The residue at position 316 (Thr-316) is a Phosphothreonine. A phosphoserine mark is found at Ser-318 and Ser-334. The residue at position 359 (Thr-359) is a Phosphothreonine. Lys-366 carries the post-translational modification N6-acetyllysine. Basic and acidic residues predominate over residues Phe-368–Pro-384. Positions Lys-391 to Ala-401 are enriched in polar residues. Phosphothreonine is present on residues Thr-392 and Thr-396. 2 positions are modified to phosphoserine: Ser-414 and Ser-444. Residues Asn-490–Lys-511 form a disordered region. Over residues Leu-496–Lys-511 the composition is skewed to polar residues. 3 positions are modified to phosphoserine: Ser-513, Ser-548, and Ser-556. Residues Phe-564 to Ile-599 are a coiled coil. Positions Ser-623–Ala-635 are enriched in polar residues. Residues Ser-623–Ser-656 form a disordered region. 4 positions are modified to phosphoserine: Ser-637, Ser-653, Ser-656, and Ser-659. Tyr-666 bears the Phosphotyrosine mark. Phosphoserine occurs at positions 673, 683, 787, and 924. The localization to the cleavage furrow stretch occupies residues Gln-725 to Pro-1121. The region spanning Ala-980–Val-1104 is the PH domain.

Interacts with F-actin. Interacts with CD2AP. May interact with RHOA. Interacts with FZR1/CDH1 during mitotic exit. In terms of processing, phosphorylated during mitosis. Post-translationally, ubiquitinated, and this requires FZR1/CDH1.

It is found in the nucleus. The protein localises to the cytoplasm. Its subcellular location is the cytoskeleton. The protein resides in the cell cortex. It localises to the cell projection. It is found in the bleb. Required for cytokinesis. Essential for the structural integrity of the cleavage furrow and for completion of cleavage furrow ingression. Plays a role in bleb assembly during metaphase and anaphase of mitosis. May play a significant role in podocyte cell migration. In Mus musculus (Mouse), this protein is Anillin (Anln).